Here is a 232-residue protein sequence, read N- to C-terminus: Large ribosomal subunit protein uL1 (232 aa).

This sequence belongs to the universal ribosomal protein uL1 family. In terms of assembly, part of the 50S ribosomal subunit.

Binds directly to 23S rRNA. The L1 stalk is quite mobile in the ribosome, and is involved in E site tRNA release. Its function is as follows. Protein L1 is also a translational repressor protein, it controls the translation of the L11 operon by binding to its mRNA. In Phocaeicola vulgatus (strain ATCC 8482 / DSM 1447 / JCM 5826 / CCUG 4940 / NBRC 14291 / NCTC 11154) (Bacteroides vulgatus), this protein is Large ribosomal subunit protein uL1.